A 585-amino-acid chain; its full sequence is Regulator of gene activity (585 aa).

Residues 42–56 (FQTDFANSYPGTANY) are compositionally biased toward polar residues. Disordered regions lie at residues 42-93 (FQTD…GNRN), 148-191 (GGGG…PGSK), and 349-394 (GVGG…KVTN). Over residues 58 to 71 (QAPQQQQQQQQQPQ) the composition is skewed to low complexity. The segment covering 166-184 (PSLTNARGQNDQTLPQSNP) has biased composition (polar residues). A compositionally biased stretch (gly residues) spans 349–367 (GVGGGLGSGSGSSGSGAGG). Residues 372 to 388 (DNSSNDKLVKSGVQTSP) show a composition bias toward polar residues.

This sequence belongs to the CNOT2/3/5 family. Component of the CCR4-NOT complex composed of at least Pop2/Caf1-55, Ccr4, Not1, Rga/Not2, and Not3. Expressed in heterogeneous levels between adjacent germline stem cells (at protein level).

It localises to the cytoplasm. Its function is as follows. Component of the CCR4-NOT complex which is one of the major cellular mRNA deadenylases and is linked to various cellular processes including bulk mRNA degradation, miRNA-mediated repression, translational repression during translational initiation and general transcription regulation. Additional complex functions may be a consequence of its influence on mRNA expression. Essential for viability. Acts as a suppressor of position effect variegation (PEV) at the white locus and regulates the expression of several unrelated genes. Plays a role in germline stem cell differentiation in the ovaries. This Drosophila melanogaster (Fruit fly) protein is Regulator of gene activity.